Consider the following 179-residue polypeptide: Adaptation to cold protein A (179 aa).

The interval 133–179 (KATPAPKRSADDDFEDEDSDYADYSDDDDDEGEEEDGYYDHYDDEDR) is disordered. Acidic residues predominate over residues 144–179 (DDFEDEDSDYADYSDDDDDEGEEEDGYYDHYDDEDR).

Its function is as follows. Part of an operon involved in cold adaptation. This is Adaptation to cold protein A from Shewanella oneidensis (strain ATCC 700550 / JCM 31522 / CIP 106686 / LMG 19005 / NCIMB 14063 / MR-1).